A 678-amino-acid chain; its full sequence is MGYGNSRSVRFQEDQEVVHGGESGVKLKFKINGTQINNVKMMSKGKFLKAKVLSRVFSEDLERVKTKILDPRGQTIRRWNKIFLIACLVSLFVDPLFFFLPVMRNEACITIGVRLEVVLTLIRSLADAFYIAQILIRFRTAYIAPPSRVFGRGELVIDSRKIAWRYLHKSFWIHLVAALPLPQVLIWIIIPNLRGSPMTNTKNVLRFIIIFQYVPRMFLIFPLSRQIIKATGVVTETAWAGAAYNLMLYMLASHVLGACWYLLAVERQEACWRHACNIEKQICQYRFFECRRLEDPQRNSWFEWSNITTICKPASKFYEFGIFGDAVTSTVTSSKFINKYFYCLWWGLKNLSSLGQNLATSTYAGEILFAIIIATLGLVLFALLIGNMQTYLQSTTMRLEEWRIRRTDTEQWMHHRQLPPELRQAVRKYDQYKWLATRGVDEEALLISLPLDLRRDIKRHLCFDLVRRVPLFDQMDERMLDAICERLKPALCTEGTFLVREGDPVNEMLFIIRGHLDSYTTNGGRTGFFNSCLIGPGDFCGEELLTWALDPRPVVILPSSTRTVKAICEVEAFALKAEDLQFVASQFRRLHTKQLRHKFRFYSHQWRTWAACFIQAAWRRHRKRKYKTELRAKEEFHYRFEAATARLAVNGGKYTRSGSDSGMMSSIQKPVEPDFSSE.

The Cytoplasmic segment spans residues 1-81 (MGYGNSRSVR…RGQTIRRWNK (81 aa)). The helical transmembrane segment at 82–102 (IFLIACLVSLFVDPLFFFLPV) threads the bilayer. Residues 103 to 115 (MRNEACITIGVRL) lie on the Extracellular side of the membrane. A helical transmembrane segment spans residues 116–136 (EVVLTLIRSLADAFYIAQILI). The Cytoplasmic portion of the chain corresponds to 137 to 170 (RFRTAYIAPPSRVFGRGELVIDSRKIAWRYLHKS). A helical membrane pass occupies residues 171-191 (FWIHLVAALPLPQVLIWIIIP). Residues 192–203 (NLRGSPMTNTKN) lie on the Extracellular side of the membrane. The helical transmembrane segment at 204-224 (VLRFIIIFQYVPRMFLIFPLS) threads the bilayer. Residues 225-245 (RQIIKATGVVTETAWAGAAYN) lie on the Cytoplasmic side of the membrane. Residues 246 to 266 (LMLYMLASHVLGACWYLLAVE) form a helical membrane-spanning segment. Over 267–364 (RQEACWRHAC…GQNLATSTYA (98 aa)) the chain is Extracellular. A helical transmembrane segment spans residues 365–385 (GEILFAIIIATLGLVLFALLI). Over 386–678 (GNMQTYLQST…KPVEPDFSSE (293 aa)) the chain is Cytoplasmic. Residues 471–595 (LFDQ…TKQL) and E542 contribute to the a nucleoside 3',5'-cyclic phosphate site. The segment at 587–602 (FRRLHTKQLRHKFRFY) is calmodulin-binding. The 32-residue stretch at 607–638 (RTWAACFIQAAWRRHRKRKYKTELRAKEEFHY) folds into the IQ domain. The segment covering 656-668 (RSGSDSGMMSSIQ) has biased composition (polar residues). Positions 656 to 678 (RSGSDSGMMSSIQKPVEPDFSSE) are disordered.

This sequence belongs to the cyclic nucleotide-gated cation channel (TC 1.A.1.5) family. In terms of assembly, homotetramer or heterotetramer.

It is found in the cell membrane. In terms of biological role, putative cyclic nucleotide-gated ion channel. This chain is Putative cyclic nucleotide-gated ion channel 15 (CNGC15), found in Arabidopsis thaliana (Mouse-ear cress).